Consider the following 154-residue polypeptide: SKP1-like protein 13 (154 aa).

The segment at Met-96 to Glu-154 is interaction with the F-box domain of F-box proteins.

It belongs to the SKP1 family. As to quaternary structure, part of a SCF (SKP1-cullin-F-box) protein ligase complex. Interacts with ADO3/FKF1, EBF1, PP2A13, SKIP15, SKIP16, CPR1/CPR30, At1g55000, At3g61590, At1g67340, At1g78100, At3g04660, At4g38940, At4g39550 and At5g49610. In terms of tissue distribution, mostly expressed in inflorescences, and, to a lower extent, in seedlings and siliques. Also detected in cotyledons, leaves, pollen and seeds.

Its subcellular location is the nucleus. Its pathway is protein modification; protein ubiquitination. Involved in ubiquitination and subsequent proteasomal degradation of target proteins. Together with CUL1, RBX1 and a F-box protein, it forms a SCF E3 ubiquitin ligase complex. The functional specificity of this complex depends on the type of F-box protein. In the SCF complex, it serves as an adapter that links the F-box protein to CUL1. This chain is SKP1-like protein 13 (ASK13), found in Arabidopsis thaliana (Mouse-ear cress).